The following is an 87-amino-acid chain: DNA-directed RNA polymerase subunit omega (87 aa).

Belongs to the RNA polymerase subunit omega family. In terms of assembly, the RNAP catalytic core consists of 2 alpha, 1 beta, 1 beta' and 1 omega subunit. When a sigma factor is associated with the core the holoenzyme is formed, which can initiate transcription.

It carries out the reaction RNA(n) + a ribonucleoside 5'-triphosphate = RNA(n+1) + diphosphate. Promotes RNA polymerase assembly. Latches the N- and C-terminal regions of the beta' subunit thereby facilitating its interaction with the beta and alpha subunits. The protein is DNA-directed RNA polymerase subunit omega of Pseudomonas putida (strain W619).